Consider the following 356-residue polypeptide: Putative methylthioribose-1-phosphate isomerase (356 aa).

Substrate-binding positions include 57 to 59 (RGA), Arg-100, and Gln-206. The active-site Proton donor is the Asp-247. 257 to 258 (NK) contacts substrate.

Belongs to the eIF-2B alpha/beta/delta subunits family. MtnA subfamily.

The catalysed reaction is 5-(methylsulfanyl)-alpha-D-ribose 1-phosphate = 5-(methylsulfanyl)-D-ribulose 1-phosphate. In terms of biological role, catalyzes the interconversion of methylthioribose-1-phosphate (MTR-1-P) into methylthioribulose-1-phosphate (MTRu-1-P). This chain is Putative methylthioribose-1-phosphate isomerase, found in Pyrococcus furiosus (strain ATCC 43587 / DSM 3638 / JCM 8422 / Vc1).